The following is a 476-amino-acid chain: Rab-3A-interacting protein (476 aa).

Residues Ser163 and Ser165 each carry the phosphoserine; by PKB/AKT1 modification. Positions 165–260 form a coiled coil; it reads SVLEVREKGY…EVAALKTLVL (96 aa). Residues 262–297 are disordered; the sequence is SSPTSPTQEPLPGGKTPFKKGHTRNKSTSSAMSGSH. 4 positions are modified to phosphoserine: Ser263, Ser266, Ser288, and Ser296. Polar residues predominate over residues 287–297; the sequence is KSTSSAMSGSH. Positions 435–444 are important for RAB11A binding; that stretch reads TYIRYIQQGL.

This sequence belongs to the SEC2 family. In terms of assembly, homodimer. Interacts with the N-terminal region of SSX2. Interacts with the GDP-bound forms of RAB8A and RAB8B. The interaction with RAB8A is prevented by phosphorylation of RAB8A at 'Thr-72'. Interacts with the GDP-bound forms of RAB3A and RAB3D. Interacts with DCDC1. Interacts (via the N-terminal region) with TRAPPC14; this interaction mediates RAB3IP association with the TRAPP II complex. Forms a heterotetramer with RAB11A where RAB3IP homodimer binds two RAB11A subunits. Forms a complex with RAB11A and RAB11FIP3, probably a heterohexamer with two of each protein subunit, where Rabin8/RAB3IP and RAB11FIP3 simultaneously bind to RAB11A; the complex promotes preciliary trafficking. Forms a complex containing RAB11A, ASAP1, RAB3IP, RAP11FIP3 and ARF4; the complex promotes preciliary trafficking; the complex binds to RHO in photoreceptor cells and promotes RHO ciliary transport. In terms of processing, phosphorylated by AKT1; the phosphorylation alters its GEF activity. Expressed in brain, kidney, heart, pancreas and placenta. Not detected in skeletal muscle or liver.

It is found in the cytoplasm. It localises to the nucleus. The protein localises to the cytoskeleton. The protein resides in the cell projection. Its subcellular location is the lamellipodium. It is found in the vesicle. It localises to the microtubule organizing center. The protein localises to the centrosome. With respect to regulation, phosphorylation by ATK1 alters its GEF activity. Complex formation with RAB11A and RAB11FIP3 and ciliogenesis function are competitively inhibited by RAB11A-WDR44 interaction. Functionally, guanine nucleotide exchange factor (GEF) which may activate RAB8A and RAB8B. Promotes the exchange of GDP to GTP, converting inactive GDP-bound Rab proteins into their active GTP-bound form. Mediates the release of GDP from RAB8A and RAB8B but not from RAB3A or RAB5. Modulates actin organization and promotes polarized transport of RAB8A-specific vesicles to the cell surface. Together with RAB11A, RAB8A, the exocyst complex, PARD3, PRKCI, ANXA2, CDC42 and DNMBP promotes transcytosis of PODXL to the apical membrane initiation sites (AMIS), apical surface formation and lumenogenesis. Part of the ciliary targeting complex containing Rab11, ASAP1, RAB3IP and RAB11FIP3 and ARF4 that promotes RAB3IP preciliary vesicle trafficking to mother centriole and ciliogenesis initiation. This is Rab-3A-interacting protein from Homo sapiens (Human).